The sequence spans 88 residues: Phosphocarrier protein HPr (88 aa).

Residues 1–88 form the HPr domain; sequence MKTQQFTVID…TLLTEMGLAQ (88 aa). His15 (pros-phosphohistidine intermediate) is an active-site residue. At Ser46 the chain carries Phosphoserine; by HPrK/P.

This sequence belongs to the HPr family.

It localises to the cytoplasm. With respect to regulation, phosphorylation on Ser-46 inhibits the phosphoryl transfer from enzyme I to HPr. In terms of biological role, general (non sugar-specific) component of the phosphoenolpyruvate-dependent sugar phosphotransferase system (sugar PTS). This major carbohydrate active-transport system catalyzes the phosphorylation of incoming sugar substrates concomitantly with their translocation across the cell membrane. The phosphoryl group from phosphoenolpyruvate (PEP) is transferred to the phosphoryl carrier protein HPr by enzyme I. Phospho-HPr then transfers it to the PTS EIIA domain. Functionally, P-Ser-HPr interacts with the catabolite control protein A (CcpA), forming a complex that binds to DNA at the catabolite response elements cre, operator sites preceding a large number of catabolite-regulated genes. Thus, P-Ser-HPr is a corepressor in carbon catabolite repression (CCR), a mechanism that allows bacteria to coordinate and optimize the utilization of available carbon sources. P-Ser-HPr also plays a role in inducer exclusion, in which it probably interacts with several non-PTS permeases and inhibits their transport activity. This Lysinibacillus sphaericus (Bacillus sphaericus) protein is Phosphocarrier protein HPr (ptsH).